We begin with the raw amino-acid sequence, 1939 residues long: Myosin heavy chain, skeletal muscle, adult (1939 aa).

Ala2 is modified (N-acetylalanine). A Myosin N-terminal SH3-like domain is found at 34–83 (DAKSSVFVVHPKESFVKGTIQSKEGGKVTVKTEGGETLTVKEDQVFSMNP). N6-methyllysine is present on Lys36. A Myosin motor domain is found at 87–781 (DKIEDMAMMT…LLGLLEEMRD (695 aa)). Lys131 is modified (N6,N6,N6-trimethyllysine). 180–187 (GESGAGKT) serves as a coordination point for ATP. The residue at position 552 (Lys552) is an N6,N6,N6-trimethyllysine. The segment at 658 to 680 (LNKLMANLRSTHPHFVRCIIPNE) is actin-binding. His756 is subject to Pros-methylhistidine. The tract at residues 760 to 774 (RFGHTKVFFKAGLLG) is actin-binding. Residues 784–813 (LAEIITRTQARCRGFLMRVEYRRMVERRES) enclose the IQ domain. The hinge stretch occupies residues 839–841 (IKP). Residues 842–1939 (LLKSAESEKE…IHGKKIEEEE (1098 aa)) are a coiled coil.

Belongs to the TRAFAC class myosin-kinesin ATPase superfamily. Myosin family. Muscle myosin is a hexameric protein that consists of 2 heavy chain subunits (MHC), 2 alkali light chain subunits (MLC) and 2 regulatory light chain subunits (MLC-2).

Its subcellular location is the cytoplasm. The protein localises to the myofibril. In terms of biological role, muscle contraction. Myosin is a protein that binds to F-actin and has ATPase activity that is activated by F-actin. The chain is Myosin heavy chain, skeletal muscle, adult from Gallus gallus (Chicken).